The primary structure comprises 214 residues: Thiamine-phosphate synthase (214 aa).

4-amino-2-methyl-5-(diphosphooxymethyl)pyrimidine contacts are provided by residues 39 to 43 (QYRFK) and asparagine 71. Mg(2+) is bound by residues aspartate 72 and aspartate 91. Serine 110 provides a ligand contact to 4-amino-2-methyl-5-(diphosphooxymethyl)pyrimidine. 136–138 (TKT) contacts 2-[(2R,5Z)-2-carboxy-4-methylthiazol-5(2H)-ylidene]ethyl phosphate. Residue lysine 139 participates in 4-amino-2-methyl-5-(diphosphooxymethyl)pyrimidine binding. 2-[(2R,5Z)-2-carboxy-4-methylthiazol-5(2H)-ylidene]ethyl phosphate-binding positions include glycine 166 and 186–187 (VS).

Belongs to the thiamine-phosphate synthase family. It depends on Mg(2+) as a cofactor.

It catalyses the reaction 2-[(2R,5Z)-2-carboxy-4-methylthiazol-5(2H)-ylidene]ethyl phosphate + 4-amino-2-methyl-5-(diphosphooxymethyl)pyrimidine + 2 H(+) = thiamine phosphate + CO2 + diphosphate. The enzyme catalyses 2-(2-carboxy-4-methylthiazol-5-yl)ethyl phosphate + 4-amino-2-methyl-5-(diphosphooxymethyl)pyrimidine + 2 H(+) = thiamine phosphate + CO2 + diphosphate. The catalysed reaction is 4-methyl-5-(2-phosphooxyethyl)-thiazole + 4-amino-2-methyl-5-(diphosphooxymethyl)pyrimidine + H(+) = thiamine phosphate + diphosphate. It functions in the pathway cofactor biosynthesis; thiamine diphosphate biosynthesis; thiamine phosphate from 4-amino-2-methyl-5-diphosphomethylpyrimidine and 4-methyl-5-(2-phosphoethyl)-thiazole: step 1/1. Functionally, condenses 4-methyl-5-(beta-hydroxyethyl)thiazole monophosphate (THZ-P) and 2-methyl-4-amino-5-hydroxymethyl pyrimidine pyrophosphate (HMP-PP) to form thiamine monophosphate (TMP). This Hydrogenobaculum sp. (strain Y04AAS1) protein is Thiamine-phosphate synthase.